Consider the following 427-residue polypeptide: Peptidase B (427 aa).

2 residues coordinate Mn(2+): Lys-195 and Asp-200. Residue Lys-207 is part of the active site. Positions 218, 277, and 279 each coordinate Mn(2+). The active site involves Arg-281.

Belongs to the peptidase M17 family. In terms of assembly, homohexamer. It depends on Mn(2+) as a cofactor.

The protein resides in the cytoplasm. The enzyme catalyses Release of an N-terminal amino acid, Xaa, from a peptide or arylamide. Xaa is preferably Glu or Asp but may be other amino acids, including Leu, Met, His, Cys and Gln.. Probably plays an important role in intracellular peptide degradation. In Salmonella choleraesuis (strain SC-B67), this protein is Peptidase B.